Reading from the N-terminus, the 433-residue chain is uncharacterized protein (433 aa).

A Radical SAM core domain is found at 104 to 349; that stretch reads ERGRNIIQVR…ELEYKKKGIE (246 aa). [4Fe-4S] cluster contacts are provided by Cys-118, Cys-122, and Cys-125. S-adenosyl-L-methionine is bound by residues 171-172 and 236-238; these read GE and MLS. The TRAM domain maps to 370-433; that stretch reads PFKVGEVTKV…KDNIIVAELV (64 aa).

The protein belongs to the radical SAM superfamily. [4Fe-4S] cluster serves as cofactor.

This is an uncharacterized protein from Methanocaldococcus jannaschii (strain ATCC 43067 / DSM 2661 / JAL-1 / JCM 10045 / NBRC 100440) (Methanococcus jannaschii).